Here is a 148-residue protein sequence, read N- to C-terminus: UPF0756 membrane protein Ent638_1667 (148 aa).

Helical transmembrane passes span 14–34 (ALGF…LIIV), 51–71 (LTIG…SGTL), 86–106 (LIAI…VTLM), and 121–141 (VLGV…AGLV).

The protein belongs to the UPF0756 family.

It is found in the cell membrane. This Enterobacter sp. (strain 638) protein is UPF0756 membrane protein Ent638_1667.